Here is a 226-residue protein sequence, read N- to C-terminus: Small ribosomal subunit protein uS3 (226 aa).

Residues 39 to 107 enclose the KH type-2 domain; it reads VRKFLNKELR…PAQINISEVR (69 aa).

This sequence belongs to the universal ribosomal protein uS3 family. In terms of assembly, part of the 30S ribosomal subunit. Forms a tight complex with proteins S10 and S14.

Binds the lower part of the 30S subunit head. Binds mRNA in the 70S ribosome, positioning it for translation. In Idiomarina loihiensis (strain ATCC BAA-735 / DSM 15497 / L2-TR), this protein is Small ribosomal subunit protein uS3.